We begin with the raw amino-acid sequence, 242 residues long: Endoglucanase (242 aa).

The signal sequence occupies residues 1 to 21 (MQVIVLPLVFLATFATSGSLA). The active-site Nucleophile is the Asp47. Residues Asn79, Asn103, and Asn217 are each glycosylated (N-linked (GlcNAc...) asparagine).

Belongs to the glycosyl hydrolase 45 (cellulase K) family. As to expression, expressed in larval carcasses and gut, and adult gut.

Its subcellular location is the secreted. It catalyses the reaction Endohydrolysis of (1-&gt;4)-beta-D-glucosidic linkages in cellulose, lichenin and cereal beta-D-glucans.. The chain is Endoglucanase from Phaedon cochleariae (Mustard beetle).